The sequence spans 387 residues: Type 2 DNA topoisomerase 6 subunit A (387 aa).

The region spanning 12-160 (EARKKALAVF…MLILSKEKGK (149 aa)) is the Topo IIA-type catalytic domain. The O-(5'-phospho-DNA)-tyrosine intermediate role is filled by Tyr106. 2 residues coordinate Mg(2+): Glu207 and Asp259.

It belongs to the TOP6A family. As to quaternary structure, homodimer. Heterotetramer of two Top6A and two Top6B chains. Mg(2+) is required as a cofactor.

It carries out the reaction ATP-dependent breakage, passage and rejoining of double-stranded DNA.. Its function is as follows. Relaxes both positive and negative superturns and exhibits a strong decatenase activity. The chain is Type 2 DNA topoisomerase 6 subunit A from Hyperthermus butylicus (strain DSM 5456 / JCM 9403 / PLM1-5).